A 439-amino-acid chain; its full sequence is 3-phosphoshikimate 1-carboxyvinyltransferase (439 aa).

3-phosphoshikimate contacts are provided by Lys-27, Ser-28, and Arg-32. Lys-27 contacts phosphoenolpyruvate. Gly-101 and Arg-130 together coordinate phosphoenolpyruvate. 3-phosphoshikimate is bound by residues Ser-175, Gln-177, Asp-326, and Lys-353. Gln-177 serves as a coordination point for phosphoenolpyruvate. Residue Asp-326 is the Proton acceptor of the active site. Arg-357 and Arg-399 together coordinate phosphoenolpyruvate.

This sequence belongs to the EPSP synthase family. As to quaternary structure, monomer.

Its subcellular location is the cytoplasm. The catalysed reaction is 3-phosphoshikimate + phosphoenolpyruvate = 5-O-(1-carboxyvinyl)-3-phosphoshikimate + phosphate. Its pathway is metabolic intermediate biosynthesis; chorismate biosynthesis; chorismate from D-erythrose 4-phosphate and phosphoenolpyruvate: step 6/7. Its function is as follows. Catalyzes the transfer of the enolpyruvyl moiety of phosphoenolpyruvate (PEP) to the 5-hydroxyl of shikimate-3-phosphate (S3P) to produce enolpyruvyl shikimate-3-phosphate and inorganic phosphate. The sequence is that of 3-phosphoshikimate 1-carboxyvinyltransferase from Synechococcus sp. (strain WH7803).